A 301-amino-acid chain; its full sequence is MNKIRCALIGPGNIGTDLLYKLRRSDILEPVWMVGVEPTSEGLARARELGLKTTSDGIDGLLPHLEADDIRIAFDATSAYVHAEHSAKLTARGVRVIDLTPAAIGPFCVPPVNLAAHIGSNEMNVNMVTCGGQATIPMVYAVSRVQPVAYGEIVATVSSRSVGPGTRRNIDEFTRTTAGAIEAVGGARQGKAIIVINPAEPPLIMRDTIHCLTEDAPDVAAITASVHDMIAEVRKYVPGYTLKNGPVFDGKRVSIFLEVEGLGDYLPKYAGNLDIMTASAARTAECIAAAMRAGSPETATA.

Cysteine 130 serves as the catalytic Acyl-thioester intermediate. NAD(+) contacts are provided by residues 161 to 169 and asparagine 272; that span reads SVGPGTRRN.

It belongs to the acetaldehyde dehydrogenase family.

The catalysed reaction is acetaldehyde + NAD(+) + CoA = acetyl-CoA + NADH + H(+). This Cupriavidus taiwanensis (strain DSM 17343 / BCRC 17206 / CCUG 44338 / CIP 107171 / LMG 19424 / R1) (Ralstonia taiwanensis (strain LMG 19424)) protein is Acetaldehyde dehydrogenase (mhpF).